We begin with the raw amino-acid sequence, 459 residues long: Vasoactive intestinal polypeptide receptor 1 (459 aa).

An N-terminal signal peptide occupies residues 1–30; the sequence is MRPPSLPPARWLCVLAGALACALGPAGSRA. At 31–142 the chain is on the extracellular side; that stretch reads ASPHQECEYL…EQQQTEFYDA (112 aa). Intrachain disulfides connect Cys-37-Cys-209, Cys-50-Cys-72, Cys-63-Cys-105, Cys-86-Cys-122, and Cys-216-Cys-286. Asn-58, Asn-69, Asn-100, and Asn-104 each carry an N-linked (GlcNAc...) asparagine glycan. A helical membrane pass occupies residues 143–167; sequence VKTGYTIGYSLSLASLLVAMAILSL. The Cytoplasmic segment spans residues 168-175; that stretch reads FRKLHCTR. The chain crosses the membrane as a helical span at residues 176–197; the sequence is NYIHMHLFMSFILRATAVFIKD. Over 198 to 217 the chain is Extracellular; sequence MALFNNGETDHCSEASVSCK. A helical membrane pass occupies residues 218–242; sequence AAVVFFQYCVMANFFWLLVEGLYLH. Residues 243 to 255 lie on the Cytoplasmic side of the membrane; sequence TLLAVSFFSERKY. A helical transmembrane segment spans residues 256-277; that stretch reads FWGYILIGWGVPSVFIMIWTIV. Topologically, residues 278–293 are extracellular; the sequence is RIHFEDFGCWDTIINS. An N-linked (GlcNAc...) asparagine glycan is attached at Asn-292. The helical transmembrane segment at 294–318 threads the bilayer; that stretch reads SLWWIIKGPILISILVNFILFICII. At 319–340 the chain is on the cytoplasmic side; the sequence is RILVQKLRPPDIGKNDSSPYSR. The chain crosses the membrane as a helical span at residues 341-361; that stretch reads LAKSTLLLIPLFGVHYVMFAF. The Extracellular segment spans residues 362 to 369; the sequence is FPDNFKAQ. The chain crosses the membrane as a helical span at residues 370-393; that stretch reads VKMVFELVVGSFQGFVVAILYCFL. At 394–459 the chain is on the cytoplasmic side; sequence NGEVQAELRR…SSFQAEVSLV (66 aa).

This sequence belongs to the G-protein coupled receptor 2 family. Interacts with ADCYAP1/PACAP; activated by both PACAP27 and PACAP38 neuropeptides. Interacts with VIP; the interaction results in VIPR1 activation.

It is found in the cell membrane. In terms of biological role, g protein-coupled receptor activated by the neuropeptides vasoactive intestinal peptide (VIP) and pituitary adenylate cyclase-activating polypeptide (ADCYAP1/PACAP). Binds VIP and both PACAP27 and PACAP38 bioactive peptides with the following order of ligand affinity VIP = PACAP27 &gt; PACAP38. Ligand binding causes a conformation change that triggers signaling via guanine nucleotide-binding proteins (G proteins) and modulates the activity of downstream effectors. Activates cAMP-dependent pathway. In Mus musculus (Mouse), this protein is Vasoactive intestinal polypeptide receptor 1.